We begin with the raw amino-acid sequence, 910 residues long: Aconitate hydratase A (910 aa).

Positions 454, 520, and 523 each coordinate [4Fe-4S] cluster.

This sequence belongs to the aconitase/IPM isomerase family. Monomer. [4Fe-4S] cluster is required as a cofactor.

The enzyme catalyses citrate = D-threo-isocitrate. It carries out the reaction (2S,3R)-3-hydroxybutane-1,2,3-tricarboxylate = 2-methyl-cis-aconitate + H2O. The protein operates within carbohydrate metabolism; tricarboxylic acid cycle; isocitrate from oxaloacetate: step 2/2. Its pathway is organic acid metabolism; propanoate degradation. Functionally, involved in the catabolism of short chain fatty acids (SCFA) via the tricarboxylic acid (TCA)(acetyl degradation route) and probably the 2-methylcitrate cycle I (propionate degradation route). Catalyzes the reversible isomerization of citrate to isocitrate via cis-aconitate. Could catalyze the hydration of 2-methyl-cis-aconitate to yield (2R,3S)-2-methylisocitrate. The apo form of AcnA functions as a RNA-binding regulatory protein. The sequence is that of Aconitate hydratase A (acnA) from Pseudomonas aeruginosa (strain ATCC 15692 / DSM 22644 / CIP 104116 / JCM 14847 / LMG 12228 / 1C / PRS 101 / PAO1).